Here is a 281-residue protein sequence, read N- to C-terminus: MAGLVYPQYPVFPGYRHPYRQHPPLYKPKQQYWKPPYKGAPGPLKPTNPLDCLDGYKWAQLKALLSQLGPEFGLGRRFTKEVGVQVNPRVDACIQCSLGPRTLKNCKAGSFLFHAAPGQHAGLGIIAPVRFPLTVAVYSRLSDRRLFTLPTFTNGGKKECETQMDPAEEDLVLNRPAFQFLEQKYGFFHCKNCQTRWESAYVWCVSGTNKVYFKQFCHKCQKGHNPYYVESIECKRCKKAWCSCPERRHIDLKRPHCQELCGRCKGQRLSCDKTYSFKYII.

The 3CxxC-type zinc finger occupies 183-267 (QKYGFFHCKN…QELCGRCKGQ (85 aa)).

Belongs to the ZAR1 family. In terms of assembly, component of a cytoplasmic ribonucleoprotein complex together with eif4enif1/4E-T and cpeb1. In terms of tissue distribution, expressed in oocytes.

The protein localises to the cytoplasm. The protein resides in the cytoplasmic ribonucleoprotein granule. Functionally, mRNA-binding protein required for maternal mRNA storage, translation and degradation during oocyte maturation. Controls timing of meiosis during oogenesis. Probably promotes formation of some phase-separated membraneless compartment that stores maternal mRNAs in oocytes: acts by undergoing liquid-liquid phase separation upon binding to maternal mRNAs. Binds to the 3'-UTR of maternal mRNAs, inhibiting their translation. This is Protein ZAR1-like 1.L from Xenopus laevis (African clawed frog).